The primary structure comprises 476 residues: tRNA-2-methylthio-N(6)-dimethylallyladenosine synthase (476 aa).

The span at 1 to 14 (MTEVVHLHMPEEAR) shows a compositional bias: basic and acidic residues. The segment at 1–20 (MTEVVHLHMPEEARATQSRD) is disordered. Positions 26 to 147 (RRYYVWTVGC…APNPIYQLEE (122 aa)) constitute an MTTase N-terminal domain. 6 residues coordinate [4Fe-4S] cluster: Cys-35, Cys-71, Cys-105, Cys-170, Cys-174, and Cys-177. Positions 156–390 (DHPPVSVHVP…ERLQEQIAAE (235 aa)) constitute a Radical SAM core domain. Residues 393–453 (ARFLHQTVEV…PWSLQGVLAR (61 aa)) enclose the TRAM domain.

This sequence belongs to the methylthiotransferase family. MiaB subfamily. As to quaternary structure, monomer. It depends on [4Fe-4S] cluster as a cofactor.

The protein resides in the cytoplasm. It carries out the reaction N(6)-dimethylallyladenosine(37) in tRNA + (sulfur carrier)-SH + AH2 + 2 S-adenosyl-L-methionine = 2-methylsulfanyl-N(6)-dimethylallyladenosine(37) in tRNA + (sulfur carrier)-H + 5'-deoxyadenosine + L-methionine + A + S-adenosyl-L-homocysteine + 2 H(+). Catalyzes the methylthiolation of N6-(dimethylallyl)adenosine (i(6)A), leading to the formation of 2-methylthio-N6-(dimethylallyl)adenosine (ms(2)i(6)A) at position 37 in tRNAs that read codons beginning with uridine. The chain is tRNA-2-methylthio-N(6)-dimethylallyladenosine synthase from Roseiflexus sp. (strain RS-1).